The sequence spans 156 residues: ATP synthase subunit b (156 aa).

A helical transmembrane segment spans residues A13 to I33.

It belongs to the ATPase B chain family. As to quaternary structure, F-type ATPases have 2 components, F(1) - the catalytic core - and F(0) - the membrane proton channel. F(1) has five subunits: alpha(3), beta(3), gamma(1), delta(1), epsilon(1). F(0) has three main subunits: a(1), b(2) and c(10-14). The alpha and beta chains form an alternating ring which encloses part of the gamma chain. F(1) is attached to F(0) by a central stalk formed by the gamma and epsilon chains, while a peripheral stalk is formed by the delta and b chains.

It localises to the cell inner membrane. Its function is as follows. F(1)F(0) ATP synthase produces ATP from ADP in the presence of a proton or sodium gradient. F-type ATPases consist of two structural domains, F(1) containing the extramembraneous catalytic core and F(0) containing the membrane proton channel, linked together by a central stalk and a peripheral stalk. During catalysis, ATP synthesis in the catalytic domain of F(1) is coupled via a rotary mechanism of the central stalk subunits to proton translocation. Component of the F(0) channel, it forms part of the peripheral stalk, linking F(1) to F(0). The chain is ATP synthase subunit b from Shewanella woodyi (strain ATCC 51908 / MS32).